The sequence spans 107 residues: Urease subunit beta (107 aa).

This sequence belongs to the urease beta subunit family. As to quaternary structure, heterotrimer of UreA (gamma), UreB (beta) and UreC (alpha) subunits. Three heterotrimers associate to form the active enzyme.

The protein localises to the cytoplasm. The enzyme catalyses urea + 2 H2O + H(+) = hydrogencarbonate + 2 NH4(+). Its pathway is nitrogen metabolism; urea degradation; CO(2) and NH(3) from urea (urease route): step 1/1. In Janthinobacterium sp. (strain Marseille) (Minibacterium massiliensis), this protein is Urease subunit beta.